Consider the following 349-residue polypeptide: Cobalt-precorrin-5B C(1)-methyltransferase (349 aa).

The protein belongs to the CbiD family.

It catalyses the reaction Co-precorrin-5B + S-adenosyl-L-methionine = Co-precorrin-6A + S-adenosyl-L-homocysteine. It participates in cofactor biosynthesis; adenosylcobalamin biosynthesis; cob(II)yrinate a,c-diamide from sirohydrochlorin (anaerobic route): step 6/10. Functionally, catalyzes the methylation of C-1 in cobalt-precorrin-5B to form cobalt-precorrin-6A. This Saccharolobus islandicus (strain L.S.2.15 / Lassen #1) (Sulfolobus islandicus) protein is Cobalt-precorrin-5B C(1)-methyltransferase.